Consider the following 279-residue polypeptide: Energy-coupling factor transporter ATP-binding protein EcfA1 (279 aa).

The ABC transporter domain maps to Ile-5 to Asp-240. An ATP-binding site is contributed by Gly-40–Ser-47.

This sequence belongs to the ABC transporter superfamily. Energy-coupling factor EcfA family. As to quaternary structure, forms a stable energy-coupling factor (ECF) transporter complex composed of 2 membrane-embedded substrate-binding proteins (S component), 2 ATP-binding proteins (A component) and 2 transmembrane proteins (T component).

Its subcellular location is the cell membrane. Its function is as follows. ATP-binding (A) component of a common energy-coupling factor (ECF) ABC-transporter complex. Unlike classic ABC transporters this ECF transporter provides the energy necessary to transport a number of different substrates. The sequence is that of Energy-coupling factor transporter ATP-binding protein EcfA1 from Streptococcus pyogenes serotype M5 (strain Manfredo).